The sequence spans 434 residues: Homogentisate 1,2-dioxygenase (434 aa).

Catalysis depends on histidine 289, which acts as the Proton acceptor. Residues histidine 332 and glutamate 338 each contribute to the Fe cation site. Homogentisate contacts are provided by tyrosine 347 and histidine 368. Residue histidine 368 coordinates Fe cation.

This sequence belongs to the homogentisate dioxygenase family. Hexamer; dimer of trimers. It depends on Fe cation as a cofactor.

The enzyme catalyses homogentisate + O2 = 4-maleylacetoacetate + H(+). It participates in amino-acid degradation; L-phenylalanine degradation; acetoacetate and fumarate from L-phenylalanine: step 4/6. Functionally, involved in the catabolism of homogentisate (2,5-dihydroxyphenylacetate or 2,5-OH-PhAc), a central intermediate in the degradation of phenylalanine and tyrosine. Catalyzes the oxidative ring cleavage of the aromatic ring of homogentisate to yield maleylacetoacetate. This is Homogentisate 1,2-dioxygenase from Pseudomonas fluorescens (strain ATCC BAA-477 / NRRL B-23932 / Pf-5).